The chain runs to 307 residues: Ras-related protein RabR (307 aa).

Residues 1 to 10 (MTTTTLLSES) are compositionally biased toward polar residues. The tract at residues 1-45 (MTTTTLLSESTNNSNNTNNNTNNNTNNTMNNNNNNNNNNTIGNNN) is disordered. Residues 11–45 (TNNSNNTNNNTNNNTNNTMNNNNNNNNNNTIGNNN) show a composition bias toward low complexity. 61–68 (GDEEVGKG) is a binding site for GTP. The Effector region motif lies at 83–92 (ENLYNIEVDR). 122–126 (NFHMH) is a GTP binding site. Residues 175 to 185 (NFNCQSNSRNS) are compositionally biased toward low complexity. Residues 175–223 (NFNCQSNSRNSTNYNRHSVGNHCPNSPQKGEKENNTHSSTAPPAPPPLP) are disordered. Residues 186-202 (TNYNRHSVGNHCPNSPQ) are compositionally biased toward polar residues. GTP is bound at residue 230–233 (NKCD). Residue C304 is modified to Cysteine methyl ester. C304 carries the S-geranylgeranyl cysteine lipid modification. Residues 305–307 (NLM) constitute a propeptide, removed in mature form.

It belongs to the small GTPase superfamily. Rab family.

Its subcellular location is the cell membrane. This Dictyostelium discoideum (Social amoeba) protein is Ras-related protein RabR (rabR).